A 491-amino-acid polypeptide reads, in one-letter code: MNTQQLAKLRAFVPEMRKVRHIHFVGIGGAGMGGIAEVLANEGYQISGSDLAPNPVTRQLTKLGAQIYFNHRPENILDASVVVASSAILADNPEIVAAREARIPVIRRAEMLAELMRYRHGIAIAGTHGKTTTTAMISSIYAQAGLDPTFVNGGLVKAAGTHARLGSSRYLIAEADESDASFLHLQPMVAVITNIEADHMDTYHGDFENLKQTFINFLHNLPFYGRAVMCIDDPVVKELIPRVGRYITTYGFSEEADVRITHYQQKGAQGYFTVSRQDMADLKVVLNAPGRHNALNAAAAVAVATEEGISGSDILAALAGFQGTGRRFDFLGNFSLEHVNGKGGSAMLVDDYGHHPTEVDATIKAARAGWPDKRIVMIFQPHRYTRTRDLYDDFANVLNQVDVLLMLDVYSAGEVVIPGADSRSLCRTIRSRGKLDPILVSDPAKVTAVLAQVLDGHDLILVQGAGNIGKIARNLAETKLQPSLNEEKHNG.

126-132 (GTHGKTT) provides a ligand contact to ATP.

It belongs to the MurCDEF family.

Its subcellular location is the cytoplasm. It catalyses the reaction UDP-N-acetyl-alpha-D-muramate + L-alanine + ATP = UDP-N-acetyl-alpha-D-muramoyl-L-alanine + ADP + phosphate + H(+). The protein operates within cell wall biogenesis; peptidoglycan biosynthesis. Its function is as follows. Cell wall formation. This is UDP-N-acetylmuramate--L-alanine ligase from Photorhabdus laumondii subsp. laumondii (strain DSM 15139 / CIP 105565 / TT01) (Photorhabdus luminescens subsp. laumondii).